The chain runs to 249 residues: Phosphomannomutase 1 (249 aa).

Asp-12 serves as the catalytic Nucleophile. Mg(2+) contacts are provided by Asp-12 and Asp-14. The active-site Proton donor/acceptor is Asp-14. Alpha-D-mannose 1-phosphate-binding residues include Arg-21, Arg-123, Arg-134, Arg-141, Ser-179, and Asp-181. The Mg(2+) site is built by Asp-209, Asp-223, and Thr-227.

Belongs to the eukaryotic PMM family. Homodimer.

The protein localises to the cytoplasm. The catalysed reaction is alpha-D-mannose 1-phosphate = D-mannose 6-phosphate. It participates in nucleotide-sugar biosynthesis; GDP-alpha-D-mannose biosynthesis; alpha-D-mannose 1-phosphate from D-fructose 6-phosphate: step 2/2. Involved in the synthesis of the GDP-mannose and dolichol-phosphate-mannose required for a number of critical mannosyl transfer reactions. The protein is Phosphomannomutase 1 (pmmA) of Dictyostelium discoideum (Social amoeba).